A 73-amino-acid chain; its full sequence is UPF0435 protein OB1527 (73 aa).

The protein belongs to the UPF0435 family.

In Oceanobacillus iheyensis (strain DSM 14371 / CIP 107618 / JCM 11309 / KCTC 3954 / HTE831), this protein is UPF0435 protein OB1527.